The primary structure comprises 188 residues: Elongation factor P (188 aa).

This sequence belongs to the elongation factor P family.

The protein resides in the cytoplasm. Its pathway is protein biosynthesis; polypeptide chain elongation. Its function is as follows. Involved in peptide bond synthesis. Stimulates efficient translation and peptide-bond synthesis on native or reconstituted 70S ribosomes in vitro. Probably functions indirectly by altering the affinity of the ribosome for aminoacyl-tRNA, thus increasing their reactivity as acceptors for peptidyl transferase. The protein is Elongation factor P of Rhodopseudomonas palustris (strain ATCC BAA-98 / CGA009).